The following is a 301-amino-acid chain: Phosphatidylglycerol--prolipoprotein diacylglyceryl transferase (301 aa).

4 helical membrane passes run 10-30, 57-77, 92-112, and 119-139; these read IAFS…LAGF, LLFY…MLFY, VWEG…AVAW, and MHMF…LGFG. Arginine 140 lines the a 1,2-diacyl-sn-glycero-3-phospho-(1'-sn-glycerol) pocket. 3 helical membrane-spanning segments follow: residues 202-222, 230-250, and 264-284; these read PSQL…LWLF, YAVS…VEFV, and LTRG…LFWL.

This sequence belongs to the Lgt family.

The protein resides in the cell inner membrane. The enzyme catalyses L-cysteinyl-[prolipoprotein] + a 1,2-diacyl-sn-glycero-3-phospho-(1'-sn-glycerol) = an S-1,2-diacyl-sn-glyceryl-L-cysteinyl-[prolipoprotein] + sn-glycerol 1-phosphate + H(+). It functions in the pathway protein modification; lipoprotein biosynthesis (diacylglyceryl transfer). Its function is as follows. Catalyzes the transfer of the diacylglyceryl group from phosphatidylglycerol to the sulfhydryl group of the N-terminal cysteine of a prolipoprotein, the first step in the formation of mature lipoproteins. The chain is Phosphatidylglycerol--prolipoprotein diacylglyceryl transferase from Xylella fastidiosa (strain M23).